We begin with the raw amino-acid sequence, 640 residues long: Asparagine synthetase domain-containing protein 1 (640 aa).

The For GATase activity role is filled by cysteine 2. Positions 2–184 (CGICCAVSFS…ASGIFRIDLK (183 aa)) constitute a Glutamine amidotransferase type-2 domain. The Asparagine synthetase domain occupies 286–602 (QFIGVLSTAV…GLTASALLPK (317 aa)).

This Bos taurus (Bovine) protein is Asparagine synthetase domain-containing protein 1 (ASNSD1).